The sequence spans 308 residues: Isoaspartyl peptidase/L-asparaginase (308 aa).

The residue at position 1 (M1) is an N-acetylmethionine. The active-site Nucleophile is T168. Residues 196–199 and 219–222 each bind substrate; these read RVGD and TGHG.

This sequence belongs to the Ntn-hydrolase family. As to quaternary structure, heterodimer of an alpha and beta chain produced by autocleavage. This heterodimer may then dimerize in turn, giving rise to a heterotetramer. Post-translationally, cleaved into an alpha and beta chain by autocatalysis; this activates the enzyme. The N-terminal residue of the beta subunit is responsible for the nucleophile hydrolase activity. In terms of tissue distribution, expressed in brain, kidney, testis and tissues of the gastrointestinal tract. Present in sperm (at protein level). Over-expressed in uterine, mammary, prostatic and ovarian carcinoma.

The protein localises to the cytoplasm. It catalyses the reaction L-asparagine + H2O = L-aspartate + NH4(+). The catalysed reaction is Cleavage of a beta-linked Asp residue from the N-terminus of a polypeptide.. Glycine accelerates autocleavage into an alpha and beta chain. Functionally, has both L-asparaginase and beta-aspartyl peptidase activity. May be involved in the production of L-aspartate, which can act as an excitatory neurotransmitter in some brain regions. Is highly active with L-Asp beta-methyl ester. Besides, has catalytic activity toward beta-aspartyl dipeptides and their methyl esters, including beta-L-Asp-L-Phe, beta-L-Asp-L-Phe methyl ester (aspartame), beta-L-Asp-L-Ala, beta-L-Asp-L-Leu and beta-L-Asp-L-Lys. Does not have aspartylglucosaminidase activity and is inactive toward GlcNAc-L-Asn. Likewise, has no activity toward glutamine. The chain is Isoaspartyl peptidase/L-asparaginase (ASRGL1) from Homo sapiens (Human).